Reading from the N-terminus, the 561-residue chain is Trehalose-6-phosphate hydrolase (561 aa).

Asp-203 acts as the Nucleophile in catalysis. Glu-254 (proton donor) is an active-site residue.

It belongs to the glycosyl hydrolase 13 family.

The protein localises to the cytoplasm. It catalyses the reaction alpha,alpha-trehalose 6-phosphate + H2O = D-glucose 6-phosphate + D-glucose. Activity is stimulated by high salt concentrations with different efficiencies depending on the kind of salt. In vitro, inhibited by glucose. Hydrolyzes trehalose-6-phosphate to glucose and glucose 6-phosphate. Can also very effectively hydrolyze p-nitrophenyl-alpha-D-glucopyranoside, but not lactose, maltose, sucrose or sucrose-6-phosphate. Trehalose is also hydrolyzed, but to a much smaller extent than trehalose-6-phosphate. The polypeptide is Trehalose-6-phosphate hydrolase (Bacillus subtilis (strain 168)).